The sequence spans 159 residues: NADH-quinone oxidoreductase subunit B (159 aa).

Residues C32, C33, C97, and C126 each coordinate [4Fe-4S] cluster.

The protein belongs to the complex I 20 kDa subunit family. In terms of assembly, NDH-1 is composed of 14 different subunits. Subunits NuoB, C, D, E, F, and G constitute the peripheral sector of the complex. The cofactor is [4Fe-4S] cluster.

It localises to the cell inner membrane. The catalysed reaction is a quinone + NADH + 5 H(+)(in) = a quinol + NAD(+) + 4 H(+)(out). In terms of biological role, NDH-1 shuttles electrons from NADH, via FMN and iron-sulfur (Fe-S) centers, to quinones in the respiratory chain. The immediate electron acceptor for the enzyme in this species is believed to be ubiquinone. Couples the redox reaction to proton translocation (for every two electrons transferred, four hydrogen ions are translocated across the cytoplasmic membrane), and thus conserves the redox energy in a proton gradient. In Helicobacter acinonychis (strain Sheeba), this protein is NADH-quinone oxidoreductase subunit B.